The primary structure comprises 390 residues: tRNA(Met) cytidine acetate ligase (390 aa).

Residues 7-20 (VVEY…HKLH), Gly-101, Asn-162, and Arg-187 each bind ATP.

It belongs to the TmcAL family.

The protein localises to the cytoplasm. It carries out the reaction cytidine(34) in elongator tRNA(Met) + acetate + ATP = N(4)-acetylcytidine(34) in elongator tRNA(Met) + AMP + diphosphate. Its function is as follows. Catalyzes the formation of N(4)-acetylcytidine (ac(4)C) at the wobble position of elongator tRNA(Met), using acetate and ATP as substrates. First activates an acetate ion to form acetyladenylate (Ac-AMP) and then transfers the acetyl group to tRNA to form ac(4)C34. This Listeria monocytogenes serotype 4b (strain CLIP80459) protein is tRNA(Met) cytidine acetate ligase.